A 106-amino-acid chain; its full sequence is Small ribosomal subunit protein uS10 (106 aa).

This sequence belongs to the universal ribosomal protein uS10 family. As to quaternary structure, part of the 30S ribosomal subunit.

Functionally, involved in the binding of tRNA to the ribosomes. The chain is Small ribosomal subunit protein uS10 from Mycoplasma genitalium (strain ATCC 33530 / DSM 19775 / NCTC 10195 / G37) (Mycoplasmoides genitalium).